Reading from the N-terminus, the 305-residue chain is Tyrosine recombinase XerC (305 aa).

Residues 4 to 95 (TSIQALINKW…AVKNFYRFLE (92 aa)) enclose the Core-binding (CB) domain. Residues 116–298 (LLPKALSEDD…SIKHLEAVYT (183 aa)) form the Tyr recombinase domain. Catalysis depends on residues R159, K182, H250, R253, and H276. Y285 serves as the catalytic O-(3'-phospho-DNA)-tyrosine intermediate.

The protein belongs to the 'phage' integrase family. XerC subfamily. As to quaternary structure, forms a cyclic heterotetrameric complex composed of two molecules of XerC and two molecules of XerD.

It localises to the cytoplasm. In terms of biological role, site-specific tyrosine recombinase, which acts by catalyzing the cutting and rejoining of the recombining DNA molecules. The XerC-XerD complex is essential to convert dimers of the bacterial chromosome into monomers to permit their segregation at cell division. It also contributes to the segregational stability of plasmids. This Rickettsia rickettsii (strain Iowa) protein is Tyrosine recombinase XerC.